Consider the following 473-residue polypeptide: Ribosomal RNA small subunit methyltransferase F (473 aa).

Residues 124 to 130, glutamate 148, aspartate 175, and aspartate 193 contribute to the S-adenosyl-L-methionine site; that span reads ASAPGSK. Catalysis depends on cysteine 246, which acts as the Nucleophile.

Belongs to the class I-like SAM-binding methyltransferase superfamily. RsmB/NOP family.

The protein localises to the cytoplasm. It catalyses the reaction cytidine(1407) in 16S rRNA + S-adenosyl-L-methionine = 5-methylcytidine(1407) in 16S rRNA + S-adenosyl-L-homocysteine + H(+). In terms of biological role, specifically methylates the cytosine at position 1407 (m5C1407) of 16S rRNA. In Aliivibrio salmonicida (strain LFI1238) (Vibrio salmonicida (strain LFI1238)), this protein is Ribosomal RNA small subunit methyltransferase F.